Reading from the N-terminus, the 205-residue chain is DNA-directed RNA polymerase subunit 5 (205 aa).

Belongs to the archaeal Rpo5/eukaryotic RPB5 RNA polymerase subunit family.

The protein resides in the virion. It carries out the reaction RNA(n) + a ribonucleoside 5'-triphosphate = RNA(n+1) + diphosphate. Functionally, DNA-dependent RNA polymerase catalyzes the transcription of DNA into RNA using the four ribonucleoside triphosphates as substrates. This is DNA-directed RNA polymerase subunit 5 from Acanthamoeba polyphaga (Amoeba).